A 689-amino-acid chain; its full sequence is Glycine--tRNA ligase beta subunit (689 aa).

Belongs to the class-II aminoacyl-tRNA synthetase family. Tetramer of two alpha and two beta subunits.

It localises to the cytoplasm. It carries out the reaction tRNA(Gly) + glycine + ATP = glycyl-tRNA(Gly) + AMP + diphosphate. This chain is Glycine--tRNA ligase beta subunit, found in Coxiella burnetii (strain Dugway 5J108-111).